The following is a 354-amino-acid chain: MAKATQDSNRPHKADVGSAIPNHDLPPIPGRYHADREELLEFYRRMLMIRRFEERCGQLYGLGLIAGFCHLYIGQEAVAVGLQAALQPGRDSVITGYREHGHMLAYGIDPKIVMAELTGRASGISHGKGGSMHMFSTEHKFFGGNGIVGAQVPLGAGLAFAHKYRNDGGCSAAYFGDGSANQGQVYEAYNMAALWKLPVIFVIENNGYAMGTSIQRANAHTALSERGAGFGIPALVVDGMDVLEVRGAATVAVDWVQAGKGPIILEMKTYRYRGHSMSDPARYRSREEVNDMKENHDPLDNLKKDLFAAGVPEAELVKLDEDIRQQVKEAADFAEKAPLPADEELYTNILVGKY.

The segment at 1–29 is disordered; that stretch reads MAKATQDSNRPHKADVGSAIPNHDLPPIP.

As to quaternary structure, heterodimer of an alpha and a beta chain. The cofactor is thiamine diphosphate.

The catalysed reaction is N(6)-[(R)-lipoyl]-L-lysyl-[protein] + pyruvate + H(+) = N(6)-[(R)-S(8)-acetyldihydrolipoyl]-L-lysyl-[protein] + CO2. The pyruvate dehydrogenase complex catalyzes the overall conversion of pyruvate to acetyl-CoA and CO(2). It contains multiple copies of three enzymatic components: pyruvate dehydrogenase (E1), dihydrolipoamide acetyltransferase (E2) and lipoamide dehydrogenase (E3). This Zymomonas mobilis subsp. mobilis (strain ATCC 31821 / ZM4 / CP4) protein is Pyruvate dehydrogenase E1 component subunit alpha (pdhA).